The sequence spans 142 residues: Nucleoside diphosphate kinase (142 aa).

Residues Lys-11, Phe-59, Arg-87, Thr-93, Arg-104, and Asn-114 each coordinate ATP. His-117 functions as the Pros-phosphohistidine intermediate in the catalytic mechanism.

It belongs to the NDK family. Homotetramer. Requires Mg(2+) as cofactor.

The protein resides in the cytoplasm. It carries out the reaction a 2'-deoxyribonucleoside 5'-diphosphate + ATP = a 2'-deoxyribonucleoside 5'-triphosphate + ADP. It catalyses the reaction a ribonucleoside 5'-diphosphate + ATP = a ribonucleoside 5'-triphosphate + ADP. Major role in the synthesis of nucleoside triphosphates other than ATP. The ATP gamma phosphate is transferred to the NDP beta phosphate via a ping-pong mechanism, using a phosphorylated active-site intermediate. The protein is Nucleoside diphosphate kinase of Hahella chejuensis (strain KCTC 2396).